A 317-amino-acid chain; its full sequence is Phospho-N-acetylmuramoyl-pentapeptide-transferase (317 aa).

9 consecutive transmembrane segments (helical) span residues 6–26 (IVMA…IIIP), 52–72 (PTIG…IMVG), 78–98 (AMIA…DDLL), 114–134 (MILL…YIGT), 145–165 (INFG…VTNA), 171–191 (GLDG…GIIS), 194–214 (LGHI…LAFL), 223–244 (VFMG…ALIL), and 297–317 (KIVS…FASL).

The protein belongs to the glycosyltransferase 4 family. MraY subfamily. The cofactor is Mg(2+).

It is found in the cell membrane. The enzyme catalyses UDP-N-acetyl-alpha-D-muramoyl-L-alanyl-gamma-D-glutamyl-meso-2,6-diaminopimeloyl-D-alanyl-D-alanine + di-trans,octa-cis-undecaprenyl phosphate = di-trans,octa-cis-undecaprenyl diphospho-N-acetyl-alpha-D-muramoyl-L-alanyl-D-glutamyl-meso-2,6-diaminopimeloyl-D-alanyl-D-alanine + UMP. It functions in the pathway cell wall biogenesis; peptidoglycan biosynthesis. Catalyzes the initial step of the lipid cycle reactions in the biosynthesis of the cell wall peptidoglycan: transfers peptidoglycan precursor phospho-MurNAc-pentapeptide from UDP-MurNAc-pentapeptide onto the lipid carrier undecaprenyl phosphate, yielding undecaprenyl-pyrophosphoryl-MurNAc-pentapeptide, known as lipid I. In Clostridium perfringens (strain 13 / Type A), this protein is Phospho-N-acetylmuramoyl-pentapeptide-transferase.